The sequence spans 964 residues: Translation initiation factor IF-2 (964 aa).

The segment covering 1 to 10 (MSDKTNDDKT) has biased composition (basic and acidic residues). Residues 1 to 379 (MSDKTNDDKT…SQMQETREKI (379 aa)) are disordered. Polar residues predominate over residues 27-37 (EQSTVRQNFSH). Residues 77–102 (APAASTPAPAQAAQPAQAAPVVRAPA) show a composition bias toward low complexity. Pro residues predominate over residues 103–113 (PATPAPKPAAP). The segment covering 114–140 (AAPVTKPHVAQQRPAQQRPGGQQAQRP) has biased composition (low complexity). Composition is skewed to basic and acidic residues over residues 156–227 (SEMD…EAAK) and 234–243 (ARTERRDDAR). The span at 250 to 278 (RPQQAGRPQGNRPPQGGRPQQGGPRPAAP) shows a compositional bias: low complexity. Positions 323-338 (PEVRAPKVVKTEDDRR) are enriched in basic and acidic residues. Residues 462–629 (SRPPVVTIMG…AILLQAEILD (168 aa)) form the tr-type G domain. A G1 region spans residues 471 to 478 (GHVDHGKT). 471-478 (GHVDHGKT) lines the GTP pocket. The interval 496–500 (GITQH) is G2. The interval 517-520 (DTPG) is G3. Residues 517–521 (DTPGH) and 571–574 (NKID) contribute to the GTP site. Positions 571–574 (NKID) are G4. The tract at residues 607–609 (SAK) is G5.

It belongs to the TRAFAC class translation factor GTPase superfamily. Classic translation factor GTPase family. IF-2 subfamily.

It localises to the cytoplasm. One of the essential components for the initiation of protein synthesis. Protects formylmethionyl-tRNA from spontaneous hydrolysis and promotes its binding to the 30S ribosomal subunits. Also involved in the hydrolysis of GTP during the formation of the 70S ribosomal complex. The sequence is that of Translation initiation factor IF-2 from Brucella anthropi (strain ATCC 49188 / DSM 6882 / CCUG 24695 / JCM 21032 / LMG 3331 / NBRC 15819 / NCTC 12168 / Alc 37) (Ochrobactrum anthropi).